A 262-amino-acid polypeptide reads, in one-letter code: Ribosomal RNA small subunit methyltransferase A (262 aa).

S-adenosyl-L-methionine-binding residues include histidine 13, leucine 15, glycine 40, glutamate 61, aspartate 85, and asparagine 103.

It belongs to the class I-like SAM-binding methyltransferase superfamily. rRNA adenine N(6)-methyltransferase family. RsmA subfamily.

The protein resides in the cytoplasm. It catalyses the reaction adenosine(1518)/adenosine(1519) in 16S rRNA + 4 S-adenosyl-L-methionine = N(6)-dimethyladenosine(1518)/N(6)-dimethyladenosine(1519) in 16S rRNA + 4 S-adenosyl-L-homocysteine + 4 H(+). Its function is as follows. Specifically dimethylates two adjacent adenosines (A1518 and A1519) in the loop of a conserved hairpin near the 3'-end of 16S rRNA in the 30S particle. May play a critical role in biogenesis of 30S subunits. The polypeptide is Ribosomal RNA small subunit methyltransferase A (Bordetella petrii (strain ATCC BAA-461 / DSM 12804 / CCUG 43448)).